The chain runs to 265 residues: L-histidine 2-aminobutanoyltransferase (265 aa).

This sequence belongs to the methyltransferase superfamily. CntL family.

It catalyses the reaction L-histidine + S-adenosyl-L-methionine = (2S)-2-amino-4-{[(1S)-1-carboxy-2-(1H-imidazol-4-yl)ethyl]amino}butanoate + S-methyl-5'-thioadenosine + H(+). Functionally, catalyzes the nucleophilic attack of one alpha-aminobutanoate moiety from SAM onto L-histidine to produce the intermediate (2S)-2-amino-4-{[(1S)-1-carboxy-2-(1H-imidazol-4-yl)ethyl]amino}butanoate. Functions in the biosynthesis of the metallophore yersinopine, which is involved in metal acquisition and thus enables bacterial growth inside the host, where metal access is limited. Therefore, this enzyme probably contributes to Yersinia virulence. The chain is L-histidine 2-aminobutanoyltransferase from Yersinia pestis.